The chain runs to 89 residues: Small ribosomal subunit protein uS15 (89 aa).

This sequence belongs to the universal ribosomal protein uS15 family. Part of the 30S ribosomal subunit. Forms a bridge to the 50S subunit in the 70S ribosome, contacting the 23S rRNA.

Functionally, one of the primary rRNA binding proteins, it binds directly to 16S rRNA where it helps nucleate assembly of the platform of the 30S subunit by binding and bridging several RNA helices of the 16S rRNA. Forms an intersubunit bridge (bridge B4) with the 23S rRNA of the 50S subunit in the ribosome. The polypeptide is Small ribosomal subunit protein uS15 (Shewanella loihica (strain ATCC BAA-1088 / PV-4)).